A 372-amino-acid chain; its full sequence is Stress-activated protein kinase JNK (372 aa).

The 297-residue stretch at 24-320 (YINLRPIGSG…VDEALKHEYI (297 aa)) folds into the Protein kinase domain. ATP contacts are provided by residues 31–36 (GSGAQG) and lysine 53. Aspartate 149 serves as the catalytic Proton acceptor. The residue at position 181 (threonine 181) is a Phosphothreonine. A TXY motif is present at residues 181–183 (TPY). A Phosphotyrosine modification is found at tyrosine 183.

This sequence belongs to the protein kinase superfamily. CMGC Ser/Thr protein kinase family. MAP kinase subfamily. In terms of assembly, interacts with MKP-4 (via tyrosine-protein phosphatase domain); the interaction dephosphorylates bsk. Mg(2+) serves as cofactor. Post-translationally, dually phosphorylated on Thr-181 and Tyr-183, which activates the enzyme. In terms of tissue distribution, during gastrulation, expression is seen in cells undergoing morphogenetic movements. By stage 9 of embryonic development, expression is ubiquitous. At stages 12-14, expression occurs in epidermis and central nervous system. At stage 15, expression is restricted to ventral nerve cord, brain and some peripheral neurons. In larvae, expression is seen in all imaginal disks, with highest levels in wing and eye disks, and in the CNS. Adults express the protein in fat body and hemocytes.

It is found in the nucleus. It localises to the cytoplasm. It catalyses the reaction L-seryl-[protein] + ATP = O-phospho-L-seryl-[protein] + ADP + H(+). The catalysed reaction is L-threonyl-[protein] + ATP = O-phospho-L-threonyl-[protein] + ADP + H(+). With respect to regulation, activated by threonine and tyrosine phosphorylation by the dual specificity kinase, hep. Inhibited by dual specificity phosphatase, puckered. Mitogen-activated protein kinase and key component of the c-Jun N-terminal kinase (JNK) pathway which phosphorylate and activate transcription factors involved in a wide range of biological processes including response to various stresses, cellular proliferation, differentiation and migration, and regulation of cell shape. Responds to activation by environmental stress by phosphorylating a number of transcription factors, primarily components of AP-1 such as Jra and also the transcriptional repressor aop, and thus regulates transcriptional activity. Component of the immune response activated by bacterial infection, and is involved in wound healing and in dorsal closure, a morphogenetic movement during embryogenesis. Functions in the systematic response to wounding acting downstream of the Hayan-phenoloxidase PPO1 cascade. During epidermal wound healing involved in cellular polarization by inducing the translocation of sktl and mys/integrin beta to the trailing edge. Exhibits cytoprotective activity in neuronal cells in response to wounding to the integument. Controls the expression of a phosphatase, puckered, at the edges of wounded epidermal tissue and in the dorsal epithelium during dorsal closure. Regulates the activity of SREBP in neurons and thereby the accumulation of lipids in glia. Plays a role in positively regulating the expression of DIP2 independently of AP-1, thereby ensuring proper axon guidance in mushroom bodies. In enterocytes and differentiating progenitors of the gut that are experiencing inorganic phosphate (Pi) deficiency, activated by Cka to induce nearby progenitor cells to proliferate and form new absorptive cells, probably helping the organism to cope with the nutrient deficiency by maximizing absorption of dietary Pi. This is Stress-activated protein kinase JNK from Drosophila melanogaster (Fruit fly).